The primary structure comprises 131 residues: RutC family protein YjgH (131 aa).

This sequence belongs to the RutC family.

The polypeptide is RutC family protein YjgH (yjgH) (Escherichia coli (strain K12)).